A 97-amino-acid polypeptide reads, in one-letter code: Co-chaperonin GroES (97 aa).

This sequence belongs to the GroES chaperonin family. As to quaternary structure, heptamer of 7 subunits arranged in a ring. Interacts with the chaperonin GroEL.

Its subcellular location is the cytoplasm. Functionally, together with the chaperonin GroEL, plays an essential role in assisting protein folding. The GroEL-GroES system forms a nano-cage that allows encapsulation of the non-native substrate proteins and provides a physical environment optimized to promote and accelerate protein folding. GroES binds to the apical surface of the GroEL ring, thereby capping the opening of the GroEL channel. The chain is Co-chaperonin GroES from Ectopseudomonas mendocina (strain ymp) (Pseudomonas mendocina).